The sequence spans 585 residues: MTSINEQLTQKFQDALVKSFGEEFKDVDPQVNLARDLRHGDYQANIALPLAKKLGKNPREIAQIIINNLSLNTICENPTIGGPGFINLKLKSSYLETQLKSLYQNQRLGIEKVHNADKVIVDFSSPNIAKEMHVGHLRSTIIGDCIARTLEFLGYEVLRLNHVGDWGTQFGMLITYLKEVYPDALTQADVLEIGDLVNFYKQAKKRFDEDPKFQEAAREAVVKLQSGDEESRKAWQLLCDQSRREFQKIYDRLDVKLIERGESFYNPYLNDVIKALDEQGILEKDQGAQCVFLEGFTNKSGDPLPLIVQKSDGGYNYATTDLAALKYRIQEDKAKRIIYVTDAGQSNHFAQVFQVAKKANFLPDTVDVTHVPFGLVKGEDGKKLKTRSGETVKLKDLLDEAVNYARKDLENRLQAEDRKESEDFINHVAETVGISAVKYADLSQNRISDYIFSYDKMLALQGNTAPYMLYAYARIQSISREGNIDYENLGENIQILLKEDTEIELGKYLLQLNETIKEVEKSLLPNRLCDYLYELSKKFNRFYENCPVLKSDEPVKTSRLLLCDLTARTLKLGLSLLGISVLERM.

The 'HIGH' region signature appears at 126-136; the sequence is PNIAKEMHVGH.

Belongs to the class-I aminoacyl-tRNA synthetase family. Monomer.

The protein localises to the cytoplasm. It catalyses the reaction tRNA(Arg) + L-arginine + ATP = L-arginyl-tRNA(Arg) + AMP + diphosphate. This chain is Arginine--tRNA ligase, found in Crocosphaera subtropica (strain ATCC 51142 / BH68) (Cyanothece sp. (strain ATCC 51142)).